A 547-amino-acid chain; its full sequence is CTP synthase (547 aa).

The tract at residues 1–265 (MARYVFITGG…DQAVLDAFGI (265 aa)) is amidoligase domain. Ser13 contributes to the CTP binding site. Ser13 serves as a coordination point for UTP. ATP-binding positions include 14-19 (SLGKGL) and Asp71. Mg(2+)-binding residues include Asp71 and Glu139. CTP-binding positions include 146–148 (DIE), 186–191 (KTKPTQ), and Lys222. UTP-binding positions include 186-191 (KTKPTQ) and Lys222. The Glutamine amidotransferase type-1 domain occupies 291–546 (RVAIVGKYTQ…VRAAVEVSRL (256 aa)). Gly353 is a binding site for L-glutamine. Cys380 (nucleophile; for glutamine hydrolysis) is an active-site residue. L-glutamine contacts are provided by residues 381-384 (LGMQ), Glu404, and Arg474. Active-site residues include His519 and Glu521.

The protein belongs to the CTP synthase family. As to quaternary structure, homotetramer.

It catalyses the reaction UTP + L-glutamine + ATP + H2O = CTP + L-glutamate + ADP + phosphate + 2 H(+). The catalysed reaction is L-glutamine + H2O = L-glutamate + NH4(+). It carries out the reaction UTP + NH4(+) + ATP = CTP + ADP + phosphate + 2 H(+). The protein operates within pyrimidine metabolism; CTP biosynthesis via de novo pathway; CTP from UDP: step 2/2. Allosterically activated by GTP, when glutamine is the substrate; GTP has no effect on the reaction when ammonia is the substrate. The allosteric effector GTP functions by stabilizing the protein conformation that binds the tetrahedral intermediate(s) formed during glutamine hydrolysis. Inhibited by the product CTP, via allosteric rather than competitive inhibition. Its function is as follows. Catalyzes the ATP-dependent amination of UTP to CTP with either L-glutamine or ammonia as the source of nitrogen. Regulates intracellular CTP levels through interactions with the four ribonucleotide triphosphates. This is CTP synthase from Cereibacter sphaeroides (strain ATCC 17023 / DSM 158 / JCM 6121 / CCUG 31486 / LMG 2827 / NBRC 12203 / NCIMB 8253 / ATH 2.4.1.) (Rhodobacter sphaeroides).